The primary structure comprises 427 residues: Gamma-glutamyl phosphate reductase (427 aa).

This sequence belongs to the gamma-glutamyl phosphate reductase family.

It localises to the cytoplasm. The enzyme catalyses L-glutamate 5-semialdehyde + phosphate + NADP(+) = L-glutamyl 5-phosphate + NADPH + H(+). The protein operates within amino-acid biosynthesis; L-proline biosynthesis; L-glutamate 5-semialdehyde from L-glutamate: step 2/2. Functionally, catalyzes the NADPH-dependent reduction of L-glutamate 5-phosphate into L-glutamate 5-semialdehyde and phosphate. The product spontaneously undergoes cyclization to form 1-pyrroline-5-carboxylate. This is Gamma-glutamyl phosphate reductase from Anaeromyxobacter dehalogenans (strain 2CP-1 / ATCC BAA-258).